The sequence spans 918 residues: Protein translocase subunit SecA (918 aa).

ATP-binding positions include Q87, 105–109 (GEGKT), and D500. The segment at 876 to 918 (AGALPVAETLERDTPESWRNTPRNAPCPCGSGKKYKHCHGQAR) is disordered. C902, C904, C913, and H914 together coordinate Zn(2+). The segment covering 908-918 (KKYKHCHGQAR) has biased composition (basic residues).

This sequence belongs to the SecA family. Monomer and homodimer. Part of the essential Sec protein translocation apparatus which comprises SecA, SecYEG and auxiliary proteins SecDF-YajC and YidC. Zn(2+) serves as cofactor.

Its subcellular location is the cell inner membrane. The protein resides in the cytoplasm. It carries out the reaction ATP + H2O + cellular proteinSide 1 = ADP + phosphate + cellular proteinSide 2.. Part of the Sec protein translocase complex. Interacts with the SecYEG preprotein conducting channel. Has a central role in coupling the hydrolysis of ATP to the transfer of proteins into and across the cell membrane, serving both as a receptor for the preprotein-SecB complex and as an ATP-driven molecular motor driving the stepwise translocation of polypeptide chains across the membrane. The polypeptide is Protein translocase subunit SecA (Rhodospirillum centenum (strain ATCC 51521 / SW)).